The following is a 66-amino-acid chain: UPF0337 protein SpyM3_0896 (66 aa).

This sequence belongs to the UPF0337 (CsbD) family.

In Streptococcus pyogenes serotype M3 (strain ATCC BAA-595 / MGAS315), this protein is UPF0337 protein SpyM3_0896.